Consider the following 696-residue polypeptide: Elongation factor G (696 aa).

The 275-residue stretch at 8–282 (KDYRNIGIMA…AVVDYLPSPL (275 aa)) folds into the tr-type G domain. GTP-binding positions include 17–24 (AHIDAGKT), 81–85 (DTPGH), and 135–138 (NKMD).

It belongs to the TRAFAC class translation factor GTPase superfamily. Classic translation factor GTPase family. EF-G/EF-2 subfamily.

It is found in the cytoplasm. Its function is as follows. Catalyzes the GTP-dependent ribosomal translocation step during translation elongation. During this step, the ribosome changes from the pre-translocational (PRE) to the post-translocational (POST) state as the newly formed A-site-bound peptidyl-tRNA and P-site-bound deacylated tRNA move to the P and E sites, respectively. Catalyzes the coordinated movement of the two tRNA molecules, the mRNA and conformational changes in the ribosome. The sequence is that of Elongation factor G from Mycoplasmopsis synoviae (strain 53) (Mycoplasma synoviae).